The primary structure comprises 671 residues: Tail sheath protein (671 aa).

Belongs to the myoviridae tail sheath protein family. In terms of assembly, homomultimer.

The protein localises to the virion. It is found in the host cytoplasm. Functionally, polymerizes as an extended structure around the baseplate-tail tube complex. During ejection, the sheath shifts to a contracted form, thereby making the inner tail tube protrude through the host cell envelope. The chain is Tail sheath protein from Vibrio phage KVP40 (isolate Vibrio parahaemolyticus/Japan/Matsuzaki/1991) (KVP40).